Consider the following 152-residue polypeptide: Large ribosomal subunit protein bL9 (152 aa).

It belongs to the bacterial ribosomal protein bL9 family.

Its function is as follows. Binds to the 23S rRNA. The chain is Large ribosomal subunit protein bL9 from Synechocystis sp. (strain ATCC 27184 / PCC 6803 / Kazusa).